A 266-amino-acid chain; its full sequence is MPAPENRFKTAIHAGKPQIGLWLDMGEAITAEIAGTAGFDWLVIDGEHGPNDLRSIIDQLRALATSPAEPVVRVPVGESWMIKQLLDAGARTLLVPMVDSAEQASDLVSAMHYPPRGIRGMGAAVARASAFNTIADYADSASDGVCLLVQAETRAAINDLDNILAVEGVDGVFIGPADLAADMGYLGRIDEPEVQAVIEAAIVKIVAAGKAAGILTFNEAYNRRYLELGASFVAVGADVTEFANTLRALSARYKGGSAPQPSRSGY.

H48 serves as the catalytic Proton acceptor. Positions 152 and 178 each coordinate a divalent metal cation.

This sequence belongs to the HpcH/HpaI aldolase family. A divalent metal cation serves as cofactor.

It catalyses the reaction D-glyceraldehyde + pyruvate = 2-dehydro-3-deoxy-L-galactonate. The enzyme catalyses 2-dehydro-3-deoxy-D-gluconate = D-glyceraldehyde + pyruvate. Its function is as follows. Aldolase which can catalyze in vitro the aldolisation reaction between hydroxypyruvate (HPA) or pyruvate (PA) and D-glyceraldehyde (D-GA). The condensation of pyruvate and D-glyceraldehyde produces 2-dehydro-3-deoxy-L-galactonate as the major product and 2-dehydro-3-deoxy-D-gluconate. Has weak activity with hydroxypyruvate and D-glyceraldehyde. This is Hydroxypyruvate/pyruvate aldolase from Agrobacterium fabrum (strain C58 / ATCC 33970) (Agrobacterium tumefaciens (strain C58)).